A 486-amino-acid polypeptide reads, in one-letter code: Protein DETOXIFICATION 16 (486 aa).

The next 12 helical transmembrane spans lie at 35–55 (GPLIAVSLLQFCLQVISVMFV), 68–88 (IATSFASVTGFSFLMGTASAL), 117–137 (LASIPLSIIWANTEHLLVFFG), 142–162 (IATLAGSYAKFMIPSIFAYGL), 179–199 (VVFCSGVTTSLHVLLCWVLVF), 207–227 (GAALANSISYWLNVVLLFCYV), 259–279 (ALMVCLEMWSFELLVLLSGLL), 288–308 (VLSICLNTSGTMWMIPFGLSG), 331–351 (RVVICIAVAESIVIGSVLILI), 365–385 (VVSYVASMMPILALGNFLDSL), 401–421 (IGAIINLGSYYLVGVPSGLLL), and 433–453 (WLGIICALVVQVFGLGLVTIF).

It belongs to the multi antimicrobial extrusion (MATE) (TC 2.A.66.1) family.

It localises to the membrane. This Arabidopsis thaliana (Mouse-ear cress) protein is Protein DETOXIFICATION 16.